Here is a 275-residue protein sequence, read N- to C-terminus: NH(3)-dependent NAD(+) synthetase (275 aa).

46–53 provides a ligand contact to ATP; the sequence is GISGGQDS. Residue aspartate 52 coordinates Mg(2+). A deamido-NAD(+)-binding site is contributed by arginine 140. ATP is bound at residue threonine 160. Glutamate 165 serves as a coordination point for Mg(2+). Deamido-NAD(+) is bound by residues lysine 173 and aspartate 180. The ATP site is built by lysine 189 and threonine 211. 260–261 provides a ligand contact to deamido-NAD(+); sequence HK.

The protein belongs to the NAD synthetase family. Homodimer.

The enzyme catalyses deamido-NAD(+) + NH4(+) + ATP = AMP + diphosphate + NAD(+) + H(+). The protein operates within cofactor biosynthesis; NAD(+) biosynthesis; NAD(+) from deamido-NAD(+) (ammonia route): step 1/1. Its function is as follows. Catalyzes the ATP-dependent amidation of deamido-NAD to form NAD. Uses ammonia as a nitrogen source. This chain is NH(3)-dependent NAD(+) synthetase, found in Erwinia tasmaniensis (strain DSM 17950 / CFBP 7177 / CIP 109463 / NCPPB 4357 / Et1/99).